Here is a 493-residue protein sequence, read N- to C-terminus: Glutamyl-tRNA(Gln) amidotransferase subunit A (493 aa).

Catalysis depends on charge relay system residues Lys-79 and Ser-159. Residue Ser-183 is the Acyl-ester intermediate of the active site.

This sequence belongs to the amidase family. GatA subfamily. As to quaternary structure, heterotrimer of A, B and C subunits.

The enzyme catalyses L-glutamyl-tRNA(Gln) + L-glutamine + ATP + H2O = L-glutaminyl-tRNA(Gln) + L-glutamate + ADP + phosphate + H(+). Functionally, allows the formation of correctly charged Gln-tRNA(Gln) through the transamidation of misacylated Glu-tRNA(Gln) in organisms which lack glutaminyl-tRNA synthetase. The reaction takes place in the presence of glutamine and ATP through an activated gamma-phospho-Glu-tRNA(Gln). This Sinorhizobium medicae (strain WSM419) (Ensifer medicae) protein is Glutamyl-tRNA(Gln) amidotransferase subunit A.